We begin with the raw amino-acid sequence, 90 residues long: uncharacterized protein (90 aa).

This is an uncharacterized protein from Escherichia coli (strain K12).